Consider the following 297-residue polypeptide: Ribosomal protein L11 methyltransferase (297 aa).

S-adenosyl-L-methionine contacts are provided by Thr152, Gly173, Asp195, and Asn234.

It belongs to the methyltransferase superfamily. PrmA family.

It is found in the cytoplasm. The catalysed reaction is L-lysyl-[protein] + 3 S-adenosyl-L-methionine = N(6),N(6),N(6)-trimethyl-L-lysyl-[protein] + 3 S-adenosyl-L-homocysteine + 3 H(+). Functionally, methylates ribosomal protein L11. In Cupriavidus pinatubonensis (strain JMP 134 / LMG 1197) (Cupriavidus necator (strain JMP 134)), this protein is Ribosomal protein L11 methyltransferase.